The chain runs to 546 residues: Methionine--tRNA ligase (546 aa).

Positions 15–25 (PYANGPIHLGH) match the 'HIGH' region motif. The Zn(2+) site is built by cysteine 146, cysteine 149, cysteine 159, and cysteine 162. A 'KMSKS' region motif is present at residues 332–336 (KMSKS). Lysine 335 contacts ATP.

Belongs to the class-I aminoacyl-tRNA synthetase family. MetG type 1 subfamily. As to quaternary structure, monomer. Zn(2+) serves as cofactor.

The protein localises to the cytoplasm. The enzyme catalyses tRNA(Met) + L-methionine + ATP = L-methionyl-tRNA(Met) + AMP + diphosphate. Is required not only for elongation of protein synthesis but also for the initiation of all mRNA translation through initiator tRNA(fMet) aminoacylation. The protein is Methionine--tRNA ligase of Coxiella burnetii (strain Dugway 5J108-111).